We begin with the raw amino-acid sequence, 222 residues long: 7-cyano-7-deazaguanine synthase (222 aa).

Position 9–19 (9–19) interacts with ATP; sequence ISGGMDSALSA. 4 residues coordinate Zn(2+): C188, C196, C199, and C202.

It belongs to the QueC family. The cofactor is Zn(2+).

The catalysed reaction is 7-carboxy-7-deazaguanine + NH4(+) + ATP = 7-cyano-7-deazaguanine + ADP + phosphate + H2O + H(+). It participates in purine metabolism; 7-cyano-7-deazaguanine biosynthesis. Functionally, catalyzes the ATP-dependent conversion of 7-carboxy-7-deazaguanine (CDG) to 7-cyano-7-deazaguanine (preQ(0)). In Sulfurovum sp. (strain NBC37-1), this protein is 7-cyano-7-deazaguanine synthase.